A 430-amino-acid chain; its full sequence is Probable carboxypeptidase AO090003000058 (430 aa).

An N-terminal signal peptide occupies residues 1–16 (MKSIYSLVLCTALTAA). Asn-84 carries an N-linked (GlcNAc...) asparagine glycan. Asp-156 contacts Zn(2+). Glu-188 functions as the Proton acceptor in the catalytic mechanism. Position 189 (Glu-189) interacts with Zn(2+). Asn-285 carries an N-linked (GlcNAc...) asparagine glycan.

Belongs to the peptidase M20A family. The cofactor is Zn(2+).

It is found in the secreted. The polypeptide is Probable carboxypeptidase AO090003000058 (Aspergillus oryzae (strain ATCC 42149 / RIB 40) (Yellow koji mold)).